Consider the following 258-residue polypeptide: Phosphoadenosine 5'-phosphosulfate reductase (258 aa).

The active-site Nucleophile; cysteine thiosulfonate intermediate is the C244.

This sequence belongs to the PAPS reductase family. CysH subfamily.

Its subcellular location is the cytoplasm. It catalyses the reaction [thioredoxin]-disulfide + sulfite + adenosine 3',5'-bisphosphate + 2 H(+) = [thioredoxin]-dithiol + 3'-phosphoadenylyl sulfate. It participates in sulfur metabolism; hydrogen sulfide biosynthesis; sulfite from sulfate: step 3/3. Functionally, catalyzes the formation of sulfite from phosphoadenosine 5'-phosphosulfate (PAPS) using thioredoxin as an electron donor. This Vibrio vulnificus (strain CMCP6) protein is Phosphoadenosine 5'-phosphosulfate reductase.